The primary structure comprises 261 residues: Thiamine thiazole synthase (261 aa).

NAD(+)-binding positions include alanine 33, 52 to 53, glycine 60, valine 124, and 152 to 154; these read ER and HVD. Residues aspartate 154 and histidine 169 each contribute to the Fe cation site. Position 219 (isoleucine 219) interacts with NAD(+). Glycine is bound at residue arginine 229.

This sequence belongs to the THI4 family. As to quaternary structure, homooctamer; tetramer of dimers. Requires Fe(2+) as cofactor.

It carries out the reaction hydrogen sulfide + glycine + NAD(+) = ADP-5-ethyl-4-methylthiazole-2-carboxylate + nicotinamide + 3 H2O + H(+). It functions in the pathway cofactor biosynthesis; thiamine diphosphate biosynthesis. Its function is as follows. Involved in the biosynthesis of the thiazole moiety of thiamine. Catalyzes the conversion of NAD and glycine to adenosine diphosphate 5-(2-hydroxyethyl)-4-methylthiazole-2-carboxylate (ADT), an adenylated thiazole intermediate, using free sulfide as a source of sulfur. This chain is Thiamine thiazole synthase, found in Pyrobaculum calidifontis (strain DSM 21063 / JCM 11548 / VA1).